Consider the following 156-residue polypeptide: 2-C-methyl-D-erythritol 2,4-cyclodiphosphate synthase (156 aa).

Positions 9 and 11 each coordinate a divalent metal cation. 4-CDP-2-C-methyl-D-erythritol 2-phosphate-binding positions include 9 to 11 and 35 to 36; these read DAH and HS. Residue His43 participates in a divalent metal cation binding. Residue 57-59 participates in 4-CDP-2-C-methyl-D-erythritol 2-phosphate binding; sequence DIG.

Belongs to the IspF family. As to quaternary structure, homotrimer. It depends on a divalent metal cation as a cofactor.

It carries out the reaction 4-CDP-2-C-methyl-D-erythritol 2-phosphate = 2-C-methyl-D-erythritol 2,4-cyclic diphosphate + CMP. The protein operates within isoprenoid biosynthesis; isopentenyl diphosphate biosynthesis via DXP pathway; isopentenyl diphosphate from 1-deoxy-D-xylulose 5-phosphate: step 4/6. Functionally, involved in the biosynthesis of isopentenyl diphosphate (IPP) and dimethylallyl diphosphate (DMAPP), two major building blocks of isoprenoid compounds. Catalyzes the conversion of 4-diphosphocytidyl-2-C-methyl-D-erythritol 2-phosphate (CDP-ME2P) to 2-C-methyl-D-erythritol 2,4-cyclodiphosphate (ME-CPP) with a corresponding release of cytidine 5-monophosphate (CMP). This is 2-C-methyl-D-erythritol 2,4-cyclodiphosphate synthase from Hydrogenobaculum sp. (strain Y04AAS1).